Reading from the N-terminus, the 107-residue chain is Nucleoid-associated protein Xfasm12_1216 (107 aa).

This sequence belongs to the YbaB/EbfC family. In terms of assembly, homodimer.

The protein resides in the cytoplasm. The protein localises to the nucleoid. Functionally, binds to DNA and alters its conformation. May be involved in regulation of gene expression, nucleoid organization and DNA protection. The sequence is that of Nucleoid-associated protein Xfasm12_1216 from Xylella fastidiosa (strain M12).